The primary structure comprises 116 residues: MEGYQRPCDEVGFNADEAHNIVKECVDGVLGGNDYNENNINQWTASIVEQSITHLVKLGKAYKYIVTCAVVQRSPYGFHTASSCFWDTTSDGTCTIRWENRTMNCIVNVFAVAIVL.

Tyrosine 4 carries the post-translational modification 3'-nitrotyrosine.

The protein belongs to the dynein light chain Tctex-type family. In terms of assembly, homodimer. The cytoplasmic dynein 1 complex consists of two catalytic heavy chains (HCs) and a number of non-catalytic subunits presented by intermediate chains (ICs), light intermediate chains (LICs) and light chains (LCs); the composition seems to vary in respect to the IC, LIC and LC composition. The heavy chain homodimer serves as a scaffold for the probable homodimeric assembly of the respective non-catalytic subunits. The ICs and LICs bind directly to the HC dimer and the LCs assemble on the IC dimer. DYNLT1 and DYNLT3 compete for association with dynein IC (DYNC1I1 or DYNC1I2). Self-associates. Interacts with DYNC1I1 and DYNC1I2. Interacts with BUB3. Interacts with SATB1 in nucleus to form complex with matrix attachment regions (MARs) of DNA.

Its subcellular location is the nucleus. It is found in the cytoplasm. It localises to the cytoskeleton. The protein resides in the chromosome. The protein localises to the centromere. Its subcellular location is the kinetochore. Its function is as follows. Acts as one of several non-catalytic accessory components of the cytoplasmic dynein 1 complex that are thought to be involved in linking dynein to cargos and to adapter proteins that regulate dynein function. Cytoplasmic dynein 1 acts as a motor for the intracellular retrograde motility of vesicles and organelles along microtubules. Probably binds BUB3 as part of transport cargo. Required for the efficient progression through mitosis. The protein is Dynein light chain Tctex-type 3 (Dynlt3) of Mus musculus (Mouse).